A 409-amino-acid polypeptide reads, in one-letter code: WW domain-containing oxidoreductase (409 aa).

Residues 1–23 form a disordered region; that stretch reads MIALPDTDSEDELPPGWEERATD. WW domains lie at 11 to 44 and 52 to 86; these read DELP…HPRT and GELP…DPRL. An NADP(+)-binding site is contributed by 128-134; it reads GANCGIG. Serine 257 lines the substrate pocket. Tyrosine 288 (proton acceptor) is an active-site residue.

It belongs to the short-chain dehydrogenases/reductases (SDR) family.

The protein resides in the cytoplasm. It localises to the mitochondrion. Its subcellular location is the golgi apparatus. It is found in the lysosome. Its function is as follows. Putative oxidoreductase. May control genotoxic stress-induced cell death. May play a role in TGFB1 signaling and TGFB1-mediated cell death. May also play a role in tumor necrosis factor (TNF)-mediated cell death. May play a role in Wnt signaling. The sequence is that of WW domain-containing oxidoreductase (Wwox) from Drosophila melanogaster (Fruit fly).